The following is a 423-amino-acid chain: Aspartate--tRNA(Asp) ligase (423 aa).

Position 163 (glutamate 163) interacts with L-aspartate. An aspartate region spans residues glutamine 185–lysine 188. Arginine 207 is an L-aspartate binding site. ATP is bound by residues arginine 207–glutamate 209, arginine 215–leucine 217, and glutamate 346. Residues glutamate 346 and serine 349 each contribute to the Mg(2+) site. 2 residues coordinate L-aspartate: serine 349 and arginine 353. An ATP-binding site is contributed by glycine 394–arginine 397.

Belongs to the class-II aminoacyl-tRNA synthetase family. Type 2 subfamily. Homodimer. The cofactor is Mg(2+).

It is found in the cytoplasm. It catalyses the reaction tRNA(Asp) + L-aspartate + ATP = L-aspartyl-tRNA(Asp) + AMP + diphosphate. Functionally, catalyzes the attachment of L-aspartate to tRNA(Asp) in a two-step reaction: L-aspartate is first activated by ATP to form Asp-AMP and then transferred to the acceptor end of tRNA(Asp). The protein is Aspartate--tRNA(Asp) ligase of Picrophilus torridus (strain ATCC 700027 / DSM 9790 / JCM 10055 / NBRC 100828 / KAW 2/3).